We begin with the raw amino-acid sequence, 736 residues long: 1,4-alpha-glucan branching enzyme GlgB (736 aa).

D419 (nucleophile) is an active-site residue. E472 (proton donor) is an active-site residue.

Belongs to the glycosyl hydrolase 13 family. GlgB subfamily. In terms of assembly, monomer.

It catalyses the reaction Transfers a segment of a (1-&gt;4)-alpha-D-glucan chain to a primary hydroxy group in a similar glucan chain.. It participates in glycan biosynthesis; glycogen biosynthesis. Catalyzes the formation of the alpha-1,6-glucosidic linkages in glycogen by scission of a 1,4-alpha-linked oligosaccharide from growing alpha-1,4-glucan chains and the subsequent attachment of the oligosaccharide to the alpha-1,6 position. This is 1,4-alpha-glucan branching enzyme GlgB from Rhizobium meliloti (strain 1021) (Ensifer meliloti).